Consider the following 791-residue polypeptide: MTTMAAAGLTDAEVAQRIAEGKTNDVPTRAARTVSEIVRANVFTRINAILGVLFVIVLSTGSVINGAFGLLIIANSAIGIIQEIRAKQTLDKLAIVGQAKPTVRRQSGTRAVLPSEVVLDDIIELGPGDQIVVDGEVVEETNLEVDESLLTGEADPIAKDAGDPVMSGSFVVAGSGAYRATKVGREAYAAKLAEEASKFTLVKSELRNGINKILQFITYLLVPAGLLTIYTQLFTTDAGWREAVLRMVGALVPMVPEGLVLMTSIAFAVGVVRLGRRQCLVNELPAIEGLARVDVVCADKTGTLTENGMRVSDLKSLTEGHVADVLAQLASDDARPNASMAAIAEAYQTPPGWSATATAPFKSATKWSGTSYGEHGNWVIGAPDVLLDPASPVAEEAERIGAQGLRVLLLGSSDRSVDAPDAPGVVTPAALVVLEQRIRPDAGDTLDYFASQHVSVKVISGDNAVSVGAVAGKLGLHGETMDARRLPEQPEKLAETLEECTTFGRVRPDQKRAMVHALQSRGHTVAMTGDGVNDVLALKDSDIGVAMGSGSSASRAVAQIVLLDNKFATLPYVVGEGRRVIGNIERVSNLFLTKTVYSVLLAILVGIGGLSAKIFGTDPLLFPFQPIHVTIAAWFTIGIPAFILSLAPNNERAKTGFVRRVMTAALPSGLVVGTATFVSYLVAYQGREATPVEQTQASTAALITLLASSLWVLAVVARPYQWWRVLLVACSMLAYVLIFSIPLAQELFMLDPTNMKVTSVALGIGLAGAALIEVLWWVQGRVLGEERRVWR.

Transmembrane regions (helical) follow at residues 53-73 (LFVIVLSTGSVINGAFGLLII), 213-233 (ILQFITYLLVPAGLLTIYTQL), and 252-272 (VPMVPEGLVLMTSIAFAVGVV). Aspartate 299 functions as the 4-aspartylphosphate intermediate in the catalytic mechanism. Residues aspartate 299, threonine 301, and aspartate 530 each contribute to the Mg(2+) site. Helical transmembrane passes span 596–616 (VYSVLLAILVGIGGLSAKIFG), 627–647 (IHVTIAAWFTIGIPAFILSLA), 664–684 (AALPSGLVVGTATFVSYLVAY), 697–717 (ASTAALITLLASSLWVLAVVA), 725–745 (VLLVACSMLAYVLIFSIPLAQ), and 757–777 (VTSVALGIGLAGAALIEVLWW).

Belongs to the cation transport ATPase (P-type) (TC 3.A.3) family.

It is found in the cell membrane. The catalysed reaction is Ca(2+)(in) + ATP + H2O = Ca(2+)(out) + ADP + phosphate + H(+). In terms of biological role, P-type ATPase involved in specific uptake of calcium. Essential for growth and maintenance of cell surface integrity under Ca(2+)-deficient conditions. The chain is Calcium-transporting ATPase CtpE from Mycolicibacterium smegmatis (strain ATCC 700084 / mc(2)155) (Mycobacterium smegmatis).